The sequence spans 349 residues: Protein Wnt-7b (349 aa).

Residues 1–24 form the signal peptide; the sequence is MHRNFRKWIFYVFLCFGVLYVKLG. 5 cysteine pairs are disulfide-bonded: C73/C84, C123/C131, C133/C152, C200/C214, and C202/C209. Residues N83 and N127 are each glycosylated (N-linked (GlcNAc...) asparagine). Residue S206 is the site of O-palmitoleoyl serine; by PORCN attachment. The interval 238–266 is disordered linker; sequence VEVVRASRLRQPTFLRIKQLRSYQKPMET. Cystine bridges form between C278/C309, C294/C304, C308/C348, C324/C339, C326/C336, and C331/C332. N295 carries an N-linked (GlcNAc...) asparagine glycan.

It belongs to the Wnt family. In terms of assembly, forms a soluble 1:1 complex with AFM; this prevents oligomerization and is required for prolonged biological activity. The complex with AFM may represent the physiological form in body fluids. Interacts with FZD1 and FZD10. Interacts with FZD4 (in vitro). Interacts with PORCN. Interacts with glypican GPC3. Interacts (via intrinsically disordered linker region) with RECK; interaction with RECK confers ligand selectivity for Wnt7 in brain endothelial cells and allows these cells to selectively respond to Wnt7. In terms of processing, palmitoleoylation is required for efficient binding to frizzled receptors. Depalmitoleoylation leads to Wnt signaling pathway inhibition. Moderately expressed in fetal brain, weakly expressed in fetal lung and kidney, and faintly expressed in adult brain, lung and prostate.

Its subcellular location is the secreted. It localises to the extracellular space. The protein resides in the extracellular matrix. Ligand for members of the frizzled family of seven transmembrane receptors that functions in the canonical Wnt/beta-catenin signaling pathway. Required for normal fusion of the chorion and the allantois during placenta development. Required for central nervous system (CNS) angiogenesis and blood-brain barrier regulation. The chain is Protein Wnt-7b (WNT7B) from Homo sapiens (Human).